Here is a 243-residue protein sequence, read N- to C-terminus: Small ribosomal subunit protein uS2c (243 aa).

Residues 224–243 (GNNGKVSSDQEDTQELQTVQ) are disordered.

This sequence belongs to the universal ribosomal protein uS2 family.

Its subcellular location is the plastid. It localises to the chloroplast. In Rhodomonas salina (Cryptomonas salina), this protein is Small ribosomal subunit protein uS2c (rps2).